The following is a 130-amino-acid chain: Small ribosomal subunit protein uS11 (130 aa).

This sequence belongs to the universal ribosomal protein uS11 family. As to quaternary structure, part of the 30S ribosomal subunit. Interacts with proteins S7 and S18. Binds to IF-3.

Functionally, located on the platform of the 30S subunit, it bridges several disparate RNA helices of the 16S rRNA. Forms part of the Shine-Dalgarno cleft in the 70S ribosome. This is Small ribosomal subunit protein uS11 from Acidiphilium cryptum (strain JF-5).